An 84-amino-acid chain; its full sequence is ATP synthase subunit c (84 aa).

The next 2 helical transmembrane spans lie at 9–29 (IIGASLLLAFAALGTAIGFAI) and 54–74 (IVAGLLDAIAMIAVGISLLFI).

Belongs to the ATPase C chain family. In terms of assembly, F-type ATPases have 2 components, F(1) - the catalytic core - and F(0) - the membrane proton channel. F(1) has five subunits: alpha(3), beta(3), gamma(1), delta(1), epsilon(1). F(0) has three main subunits: a(1), b(2) and c(10-14). The alpha and beta chains form an alternating ring which encloses part of the gamma chain. F(1) is attached to F(0) by a central stalk formed by the gamma and epsilon chains, while a peripheral stalk is formed by the delta and b chains.

It localises to the cell inner membrane. F(1)F(0) ATP synthase produces ATP from ADP in the presence of a proton or sodium gradient. F-type ATPases consist of two structural domains, F(1) containing the extramembraneous catalytic core and F(0) containing the membrane proton channel, linked together by a central stalk and a peripheral stalk. During catalysis, ATP synthesis in the catalytic domain of F(1) is coupled via a rotary mechanism of the central stalk subunits to proton translocation. Its function is as follows. Key component of the F(0) channel; it plays a direct role in translocation across the membrane. A homomeric c-ring of between 10-14 subunits forms the central stalk rotor element with the F(1) delta and epsilon subunits. The chain is ATP synthase subunit c from Haemophilus ducreyi (strain 35000HP / ATCC 700724).